The chain runs to 398 residues: Elongation factor Tu (398 aa).

Residues 10 to 207 form the tr-type G domain; sequence KPHVNIGTIG…TVDDYIPDPE (198 aa). The interval 19–26 is G1; sequence GHVDHGKT. 19-26 lines the GTP pocket; that stretch reads GHVDHGKT. T26 contacts Mg(2+). Positions 63–67 are G2; it reads GITIN. The tract at residues 84–87 is G3; sequence DAPG. GTP contacts are provided by residues 84-88 and 139-142; these read DAPGH and NKVD. A G4 region spans residues 139 to 142; the sequence is NKVD. The G5 stretch occupies residues 177 to 179; it reads SAL.

This sequence belongs to the TRAFAC class translation factor GTPase superfamily. Classic translation factor GTPase family. EF-Tu/EF-1A subfamily. Monomer.

It is found in the cytoplasm. It carries out the reaction GTP + H2O = GDP + phosphate + H(+). Functionally, GTP hydrolase that promotes the GTP-dependent binding of aminoacyl-tRNA to the A-site of ribosomes during protein biosynthesis. This is Elongation factor Tu from Streptococcus mutans serotype c (strain ATCC 700610 / UA159).